The sequence spans 916 residues: Protein translocase subunit SecA (916 aa).

Residues glutamine 87, 105–109 (GEGKT), and aspartate 512 contribute to the ATP site. The disordered stretch occupies residues 857 to 916 (QHAEAPSMEQAVAGEEEELPEGPAPVVPLEPVRNEQKIGRNEPCPCGSGKKYKHCHGQLD). Zn(2+) is bound by residues cysteine 900, cysteine 902, cysteine 911, and histidine 912. Over residues 906-916 (KKYKHCHGQLD) the composition is skewed to basic residues.

Belongs to the SecA family. In terms of assembly, monomer and homodimer. Part of the essential Sec protein translocation apparatus which comprises SecA, SecYEG and auxiliary proteins SecDF-YajC and YidC. Requires Zn(2+) as cofactor.

It is found in the cell inner membrane. It localises to the cytoplasm. The catalysed reaction is ATP + H2O + cellular proteinSide 1 = ADP + phosphate + cellular proteinSide 2.. Its function is as follows. Part of the Sec protein translocase complex. Interacts with the SecYEG preprotein conducting channel. Has a central role in coupling the hydrolysis of ATP to the transfer of proteins into and across the cell membrane, serving both as a receptor for the preprotein-SecB complex and as an ATP-driven molecular motor driving the stepwise translocation of polypeptide chains across the membrane. This chain is Protein translocase subunit SecA, found in Pseudomonas aeruginosa (strain LESB58).